The following is a 61-amino-acid chain: DNA gyrase inhibitor YacG (61 aa).

Positions 14, 17, 29, and 33 each coordinate Zn(2+).

The protein belongs to the DNA gyrase inhibitor YacG family. Interacts with GyrB. Zn(2+) is required as a cofactor.

Inhibits all the catalytic activities of DNA gyrase by preventing its interaction with DNA. Acts by binding directly to the C-terminal domain of GyrB, which probably disrupts DNA binding by the gyrase. The sequence is that of DNA gyrase inhibitor YacG from Zymomonas mobilis subsp. mobilis (strain ATCC 31821 / ZM4 / CP4).